The chain runs to 395 residues: Flap endonuclease 1 (395 aa).

The interval 1-104 (MGIKHLYQII…GELAKRFMRK (104 aa)) is N-domain. D34 contacts Mg(2+). R47 and R70 together coordinate DNA. The Mg(2+) site is built by D86, E158, E160, D179, and D181. An I-domain region spans residues 122-253 (EVEKFSRRTV…NTALKLIRDH (132 aa)). E158 is a binding site for DNA. Residues G231 and D233 each contribute to the DNA site. D233 provides a ligand contact to Mg(2+). The interval 341-349 (QQSRLEGFF) is interaction with PCNA. The span at 360–389 (AVLKRKHEEKLELQKKKKKEDSKAKKEAKS) shows a compositional bias: basic and acidic residues. The segment at 360-395 (AVLKRKHEEKLELQKKKKKEDSKAKKEAKSKPRGTT) is disordered.

Belongs to the XPG/RAD2 endonuclease family. FEN1 subfamily. As to quaternary structure, interacts with PCNA. Three molecules of FEN1 bind to one PCNA trimer with each molecule binding to one PCNA monomer. PCNA stimulates the nuclease activity without altering cleavage specificity. The cofactor is Mg(2+). Phosphorylated. Phosphorylation upon DNA damage induces relocalization to the nuclear plasma.

It localises to the nucleus. The protein resides in the nucleolus. It is found in the nucleoplasm. The protein localises to the mitochondrion. Its function is as follows. Structure-specific nuclease with 5'-flap endonuclease and 5'-3' exonuclease activities involved in DNA replication and repair. During DNA replication, cleaves the 5'-overhanging flap structure that is generated by displacement synthesis when DNA polymerase encounters the 5'-end of a downstream Okazaki fragment. It enters the flap from the 5'-end and then tracks to cleave the flap base, leaving a nick for ligation. Also involved in the long patch base excision repair (LP-BER) pathway, by cleaving within the apurinic/apyrimidinic (AP) site-terminated flap. Acts as a genome stabilization factor that prevents flaps from equilibrating into structures that lead to duplications and deletions. Also possesses 5'-3' exonuclease activity on nicked or gapped double-stranded DNA, and exhibits RNase H activity. Also involved in replication and repair of rDNA and in repairing mitochondrial DNA. This Ajellomyces capsulatus (strain H143) (Darling's disease fungus) protein is Flap endonuclease 1.